The following is a 33-amino-acid chain: Brevinin-2DYa (33 aa).

The cysteines at positions 27 and 33 are disulfide-linked.

Expressed by the skin glands.

It localises to the secreted. Functionally, antimicrobial peptide. The chain is Brevinin-2DYa from Rana dybowskii (Dybovsky's frog).